The sequence spans 175 residues: MMFTDWHEAAIGKTHNRMNFDCGDADLNQFLQRHARQNHEKGTTKTYVALDNSDVTRIHGFYSVSPASLIYAQVPGAISKGLGRYDVPVFRLGRLAVDKSMQGQGLGAQLLLSAGKRCIQAALQVGGVALLIDAKNKQVCDWYKGFGAVPLNDQPLSLLLSFKTLYAALSASGRL.

Acetyl-CoA-binding residues include leucine 95, valine 97, glycine 103, glycine 105, glycine 107, alanine 108, aspartate 133, glutamine 138, aspartate 141, and tryptophan 142. Tyrosine 143 is an active-site residue. 2 residues coordinate acetyl-CoA: glycine 145 and phenylalanine 146.

The protein belongs to the acetyltransferase family. GNAT subfamily. Homodimer (in absence of antitoxin); has a condensed and elongated form. Forms a complex with cognate antitoxin TacA3. Forms a 4:2 antitoxin:toxin complex with cognate antitoxin TacA3. Forms a 4:4 antitoxin:toxin complex with promoter DNA, where 2 TacT3 dimers bridge 2 TacA3 dimers. Only TacA3 contacts promoter DNA in the octomeric form. TacT3 may contact DNA in the hexameric form.

The catalysed reaction is glycyl-tRNA(Gly) + acetyl-CoA = N-acetylglycyl-tRNA(Gly) + CoA + H(+). Toxic component of a type II toxin-antitoxin (TA) system. Acetylates tRNA and inhibits translation. Acetylates only Gly-tRNA on all 3 Gly-tRNA(Gly) isoacceptors in situ. In vitro acetylates mainly Ile/Leu and Gly. Overexpression during the lag phase of a tacA3-tacT3 deletion strain leads to a 150-fold increase in persister cells in the presence of cefotaxime and a non-growth state in the absence of antibiotic. Persister cell formation and the growth defect are neutralized by cognate antitoxin TacA3, but not by TacA1 or TacA2. Plays a role in persister cell formation. In terms of biological role, the TacA3-TacT3 complex both represses and derepresses expression of its own operon. The hexameric 4:2 TacA3-TacT3 complex binds promoter DNA and represses its transcription; both subunits are required. The octomeric 4:4 TacA3-TacT3 complex derepresses the operon. The shift from hexameric to octomeric complex probably alters DNA-binding, leading to dissociation from the operator DNA and derepression. The polypeptide is tRNA-acetylating toxin 3 (Salmonella typhimurium (strain 14028s / SGSC 2262)).